Consider the following 253-residue polypeptide: Endonuclease NucS (253 aa).

It belongs to the NucS endonuclease family.

It is found in the cytoplasm. Its function is as follows. Cleaves both 3' and 5' ssDNA extremities of branched DNA structures. The sequence is that of Endonuclease NucS from Pyrococcus horikoshii (strain ATCC 700860 / DSM 12428 / JCM 9974 / NBRC 100139 / OT-3).